An 85-amino-acid chain; its full sequence is Large ribosomal subunit protein eL34 (85 aa).

Belongs to the eukaryotic ribosomal protein eL34 family.

This chain is Large ribosomal subunit protein eL34, found in Saccharolobus islandicus (strain Y.N.15.51 / Yellowstone #2) (Sulfolobus islandicus).